The chain runs to 73 residues: Conotoxin MaI51 (73 aa).

The N-terminal stretch at Met-1 to Ala-19 is a signal peptide. Residues Leu-20 to Glu-41 constitute a propeptide that is removed on maturation. Residue Gln-46 is modified to Pyrrolidone carboxylic acid. 3 disulfide bridges follow: Cys-47/Cys-61, Cys-54/Cys-65, and Cys-60/Cys-69. Ile-72 bears the Isoleucine amide mark.

The protein belongs to the conotoxin O2 superfamily. Expressed by the venom duct.

The protein resides in the secreted. The polypeptide is Conotoxin MaI51 (Conus marmoreus (Marble cone)).